The primary structure comprises 99 residues: Nucleoid-associated protein SSU98_0195 (99 aa).

This sequence belongs to the YbaB/EbfC family. As to quaternary structure, homodimer.

The protein localises to the cytoplasm. The protein resides in the nucleoid. Its function is as follows. Binds to DNA and alters its conformation. May be involved in regulation of gene expression, nucleoid organization and DNA protection. This Streptococcus suis (strain 98HAH33) protein is Nucleoid-associated protein SSU98_0195.